We begin with the raw amino-acid sequence, 165 residues long: UPF0178 protein Bphyt_5655 (165 aa).

Disordered regions lie at residues 115–134 (LRGS…RDSK) and 139–165 (ELDR…PPTE).

Belongs to the UPF0178 family.

The sequence is that of UPF0178 protein Bphyt_5655 from Paraburkholderia phytofirmans (strain DSM 17436 / LMG 22146 / PsJN) (Burkholderia phytofirmans).